The sequence spans 605 residues: Anaerobic ribonucleoside-triphosphate reductase (605 aa).

DCTP is bound by residues His-64 and His-66. Residues His-64, His-66, Asp-67, Glu-100, and Lys-103 each coordinate dGTP. DCTP-binding positions include Glu-100, Lys-103, Gln-114, Lys-146, and 445-448; that span reads AENL. Residues Glu-100, Lys-103, Gln-114, and Lys-146 each contribute to the dATP site. Glu-100 serves as a coordination point for dTTP. DTTP-binding residues include Gln-114 and Lys-146. 3 residues coordinate dGTP: Lys-146, Asn-447, and Leu-448. In terms of domain architecture, Glycine radical spans 482-605; sequence ENITPFEKIS…KEIMHRVKHQ (124 aa). Positions 543, 546, 561, and 564 each coordinate Zn(2+). Gly-580 is subject to Glycine radical.

This sequence belongs to the anaerobic ribonucleoside-triphosphate reductase family. Homodimer. Forms a tetramer composed of two NrdD and two NrdG subunits.

It carries out the reaction a ribonucleoside 5'-triphosphate + formate + H(+) = a 2'-deoxyribonucleoside 5'-triphosphate + CO2 + H2O. Its activity is regulated as follows. Activated under anaerobic conditions by NrdG, a tightly associated activase. Activation involves the formation of a glycyl radical at Gly-580. In terms of biological role, catalyzes the conversion of ribonucleotides into deoxyribonucleotides, which are required for DNA synthesis and repair. This chain is Anaerobic ribonucleoside-triphosphate reductase, found in Enterobacteria phage T4 (Bacteriophage T4).